Here is a 340-residue protein sequence, read N- to C-terminus: ATP-dependent 6-phosphofructokinase (340 aa).

Glycine 11 contributes to the ATP binding site. Residue 21-25 coordinates ADP; sequence RAVVR. ATP is bound by residues 72–73 and 102–105; these read RY and GDGS. Aspartate 103 is a Mg(2+) binding site. A substrate-binding site is contributed by 125–127; sequence TID. Aspartate 127 functions as the Proton acceptor in the catalytic mechanism. Residue arginine 154 coordinates ADP. Substrate contacts are provided by residues arginine 162 and 169–171; that span reads MGR. ADP is bound by residues 185–187 and 213–215; these read GAD and KHH. Residues glutamate 222, arginine 244, and 250–253 each bind substrate; that span reads HLLR.

This sequence belongs to the phosphofructokinase type A (PFKA) family. ATP-dependent PFK group I subfamily. Prokaryotic clade 'B1' sub-subfamily. In terms of assembly, homotetramer. Requires Mg(2+) as cofactor.

The protein localises to the cytoplasm. It carries out the reaction beta-D-fructose 6-phosphate + ATP = beta-D-fructose 1,6-bisphosphate + ADP + H(+). The protein operates within carbohydrate degradation; glycolysis; D-glyceraldehyde 3-phosphate and glycerone phosphate from D-glucose: step 3/4. Allosterically activated by ADP and other diphosphonucleosides, and allosterically inhibited by phosphoenolpyruvate. Functionally, catalyzes the phosphorylation of D-fructose 6-phosphate to fructose 1,6-bisphosphate by ATP, the first committing step of glycolysis. The chain is ATP-dependent 6-phosphofructokinase from Streptococcus agalactiae serotype Ia (strain ATCC 27591 / A909 / CDC SS700).